Reading from the N-terminus, the 44-residue chain is Small ribosomal subunit protein eS31 (44 aa).

Zn(2+) contacts are provided by Cys18, Cys21, Cys35, and Cys38. A C4-type zinc finger spans residues 18–38 (CPRCGDTFLAAHDDRQVCGRC).

The protein belongs to the eukaryotic ribosomal protein eS31 family. As to quaternary structure, part of the 30S ribosomal subunit. It depends on Zn(2+) as a cofactor.

The polypeptide is Small ribosomal subunit protein eS31 (Halobacterium salinarum (strain ATCC 29341 / DSM 671 / R1)).